A 226-amino-acid polypeptide reads, in one-letter code: Phosphate propanoyltransferase (226 aa).

44-46 (VSN) provides a ligand contact to CoA. His48 and His50 together coordinate Zn(2+). Residues Met72, Lys90, and Arg97 each contribute to the CoA site. Arg103 is a binding site for phosphate. Glu109 provides a ligand contact to Zn(2+). Phe116 lines the CoA pocket. Positions 157, 159, and 204 each coordinate Zn(2+). Asn211 is a CoA binding site.

The protein belongs to the PduL family. Full-length protein forms large oligomers. Homodimer, when purified in the absence of the encapsulation peptide (EP, residues 1-47). The EP may influence oligomerization. The cofactor is Zn(2+).

The protein resides in the bacterial microcompartment. The enzyme catalyses propanoyl-CoA + phosphate = propanoyl phosphate + CoA. It functions in the pathway polyol metabolism; 1,2-propanediol degradation. Functionally, involved in 1,2-propanediol (1,2-PD) utilization within the bacterial microcompartment (BMC) dedicated to 1,2-PD degradation by catalyzing the conversion of propanoyl-CoA to propanoyl-phosphate. CoA is regenerated within the pdu BMC (for use by PduP) via this enzyme, although there must also be cofactor transport across the BMC. Directly targeted to the BMC. Phosphate is probably the first substrate to bind in the forward direction. CoA is probably the first substrate to bind in the reverse direction, and might bind to the enzyme as the BMC assembles, ensuring cofactor encapsulation. The protein is Phosphate propanoyltransferase of Rhodopseudomonas palustris (strain BisB18).